We begin with the raw amino-acid sequence, 234 residues long: Leucyl/phenylalanyl-tRNA--protein transferase (234 aa).

It belongs to the L/F-transferase family.

Its subcellular location is the cytoplasm. It carries out the reaction N-terminal L-lysyl-[protein] + L-leucyl-tRNA(Leu) = N-terminal L-leucyl-L-lysyl-[protein] + tRNA(Leu) + H(+). The enzyme catalyses N-terminal L-arginyl-[protein] + L-leucyl-tRNA(Leu) = N-terminal L-leucyl-L-arginyl-[protein] + tRNA(Leu) + H(+). The catalysed reaction is L-phenylalanyl-tRNA(Phe) + an N-terminal L-alpha-aminoacyl-[protein] = an N-terminal L-phenylalanyl-L-alpha-aminoacyl-[protein] + tRNA(Phe). Its function is as follows. Functions in the N-end rule pathway of protein degradation where it conjugates Leu, Phe and, less efficiently, Met from aminoacyl-tRNAs to the N-termini of proteins containing an N-terminal arginine or lysine. This Salmonella arizonae (strain ATCC BAA-731 / CDC346-86 / RSK2980) protein is Leucyl/phenylalanyl-tRNA--protein transferase.